The chain runs to 347 residues: Transcription factor EC (347 aa).

The interval 1-119 is necessary for transcriptional transactivation; the sequence is MTLDHQIINP…GLTSASCPSS (119 aa). The region spanning 139–192 is the bHLH domain; sequence QKKDNHNLIERRRRYNINYRIKELGTLIPKSNDPDMRWNKGTILKASVEYIKWL. A necessary for transcriptional transactivation region spans residues 271 to 347; the sequence is PSPELCDQAI…SFSSDDGDEL (77 aa). The disordered stretch occupies residues 319–347; it reads DPLLSATSPAVSKESSRRSSFSSDDGDEL. Over residues 326 to 341 the composition is skewed to low complexity; sequence SPAVSKESSRRSSFSS.

It belongs to the MiT/TFE family. As to quaternary structure, homodimer. Forms heterodimers with TFE3. Forms heterodimers with MITF. Interacts with MITF. As to expression, expressed moderately in spleen, kidney, bone marrow, small intestine and leukocytes. Expressed weakly in testis, trachea and colon.

It is found in the nucleus. Its function is as follows. Transcriptional regulator that acts as a repressor or an activator. Acts as a transcriptional repressor on minimal promoter containing element F (that includes an E-box sequence). Binds to element F in an E-box sequence-specific manner. Acts as a transcriptional transactivator on the proximal promoter region of the tartrate-resistant acid phosphatase (TRAP) E-box containing promoter. Collaborates with MITF in target gene activation. Acts as a transcriptional repressor on minimal promoter containing mu E3 enhancer sequence. Binds to mu E3 DNA sequence of the immunoglobulin heavy-chain gene enhancer. Binds DNA in a homo- or heterodimeric form. This is Transcription factor EC (TFEC) from Homo sapiens (Human).